Reading from the N-terminus, the 1228-residue chain is AT-rich interactive domain-containing protein 4B (1228 aa).

2 disordered regions span residues 123-167 and 266-307; these read LPLT…DDRK and KTEL…PFPE. Phosphoserine is present on residues Ser276, Ser295, and Ser296. Positions 277–305 are enriched in acidic residues; the sequence is EAEEEEEEEDDEKEKEDNSSEEEEEIEPF. The ARID domain maps to 306–398; sequence PEERENFLQQ…YLYGFEEYCR (93 aa). Residues Lys428 and Lys461 each participate in a glycyl lysine isopeptide (Lys-Gly) (interchain with G-Cter in SUMO2) cross-link. Basic and acidic residues predominate over residues 437–464; sequence EVNVEDSKNMIPKEETPAEDESERKENI. 6 disordered regions span residues 437 to 466, 479 to 525, 539 to 606, 620 to 802, 825 to 1129, and 1168 to 1204; these read EVNVEDSKNMIPKEETPAEDESERKENIKP, PAQS…EQAR, RPAD…SDTG, LQAS…EEKR, LNNS…RLPK, and SEVASIDRRRKRLKKKERESAATSSSSSSPSSSSITA. Residue Ser482 is modified to Phosphoserine. Residues 483 to 511 are compositionally biased toward basic and acidic residues; it reads DQEKEANITKLEEKESLEDKDGATARAEE. A compositionally biased stretch (basic residues) spans 546–555; sequence PKIKHRKKIK. Over residues 556–569 the composition is skewed to basic and acidic residues; sequence NKLDKEKDRDEKYS. Ser579, Ser581, and Ser588 each carry phosphoserine. The span at 596–606 shows a compositional bias: basic and acidic residues; sequence DLADAKNSDTG. Residue Ser630 is modified to Phosphoserine. Basic and acidic residues-rich tracts occupy residues 635 to 667 and 691 to 700; these read ERCAQDPESSSKDESKVEHSAHSRSELISKEEL and SPERLRKDVE. A Glycyl lysine isopeptide (Lys-Gly) (interchain with G-Cter in SUMO2) cross-link involves residue Lys664. Residues Ser691 and Ser703 each carry the phosphoserine modification. Positions 701–713 are enriched in acidic residues; the sequence is AISEDTDFEEEDE. Residue Thr706 is modified to Phosphothreonine. Residues 721-730 show a composition bias toward basic and acidic residues; the sequence is VKKDTTDKAL. The span at 744–753 shows a compositional bias: polar residues; sequence IQTNCLQSGS. Basic and acidic residues-rich tracts occupy residues 755 to 765, 825 to 843, and 911 to 926; these read GKKEDRTKSKE, LNNSDERLQNNRAKDRKDV, and KPVEEKPLEVSDRKTE. A compositionally biased stretch (polar residues) spans 927-937; the sequence is FPSSGSNSVLN. Position 930 is a phosphoserine (Ser930). Phosphothreonine is present on Thr942. The span at 944 to 965 shows a compositional bias: low complexity; sequence ESPSSVTVTETSQQQSSVTVSV. Ser945 is subject to Phosphoserine. Over residues 972-981 the composition is skewed to basic and acidic residues; it reads EEVRSIKSET. The segment covering 1003–1017 has biased composition (low complexity); sequence SSPAGFNASVSSSSS. Positions 1046–1064 are enriched in basic residues; that stretch reads KKQKRSHKATVVNNKKKGK. A Phosphothreonine modification is found at Thr1066. 4 positions are modified to phosphoserine: Ser1068, Ser1069, Ser1071, and Ser1075. The span at 1112-1124 shows a compositional bias: basic and acidic residues; it reads KNGDKDPDLKEPS. Positions 1141 to 1186 form a coiled coil; that stretch reads ENMTSAERISILQEKLQEIRKHYLSLKSEVASIDRRRKRLKKKERE. Residues 1188–1204 show a composition bias toward low complexity; it reads AATSSSSSSPSSSSITA.

As to quaternary structure, component of a Sin3A corepressor complex consisting of SIN3A, SAP130, SUDS3/SAP45, SAP180, HDAC1 and HDAC2. Interacts with ARID4A. Interacts with AR.

Its subcellular location is the nucleus. Acts as a transcriptional repressor. May function in the assembly and/or enzymatic activity of the Sin3A corepressor complex or in mediating interactions between the complex and other regulatory complexes. Plays a role in the regulation of epigenetic modifications at the PWS/AS imprinting center near the SNRPN promoter, where it might function as part of a complex with RB1 and ARID4A. Involved in spermatogenesis, together with ARID4A, where it functions as a transcriptional coactivator for AR (androgen receptor) and enhances expression of genes required for sperm maturation. Regulates expression of the tight junction protein CLDN3 in the testis, which is important for integrity of the blood-testis barrier. Plays a role in myeloid homeostasis where it regulates the histone methylation state of bone marrow cells and expression of various genes involved in hematopoiesis. May function as a leukemia suppressor. The protein is AT-rich interactive domain-containing protein 4B (Arid4b) of Rattus norvegicus (Rat).